The following is a 411-amino-acid chain: Argininosuccinate synthase (411 aa).

Residues 11 to 19 (AYSGGLDTS) and A37 contribute to the ATP site. L-citrulline contacts are provided by Y88 and S93. 116–124 (SHGATGKGN) contacts ATP. 3 residues coordinate L-aspartate: T120, N124, and D125. N124 is a binding site for L-citrulline. L-citrulline is bound by residues R128, S181, S190, E271, and Y283.

Belongs to the argininosuccinate synthase family. Homotetramer.

It localises to the cytoplasm. It is found in the cytosol. The enzyme catalyses L-citrulline + L-aspartate + ATP = 2-(N(omega)-L-arginino)succinate + AMP + diphosphate + H(+). It participates in amino-acid biosynthesis; L-arginine biosynthesis; L-arginine from L-ornithine and carbamoyl phosphate: step 2/3. It functions in the pathway nitrogen metabolism; urea cycle; (N(omega)-L-arginino)succinate from L-aspartate and L-citrulline: step 1/1. One of the enzymes of the urea cycle, the metabolic pathway transforming neurotoxic amonia produced by protein catabolism into inocuous urea in the liver of ureotelic animals. Catalyzes the formation of arginosuccinate from aspartate, citrulline and ATP and together with ASL it is responsible for the biosynthesis of arginine in most body tissues. The chain is Argininosuccinate synthase from Xenopus laevis (African clawed frog).